Here is a 96-residue protein sequence, read N- to C-terminus: Putative pterin-4-alpha-carbinolamine dehydratase (96 aa).

It belongs to the pterin-4-alpha-carbinolamine dehydratase family.

It catalyses the reaction (4aS,6R)-4a-hydroxy-L-erythro-5,6,7,8-tetrahydrobiopterin = (6R)-L-erythro-6,7-dihydrobiopterin + H2O. This chain is Putative pterin-4-alpha-carbinolamine dehydratase, found in Metallosphaera sedula (strain ATCC 51363 / DSM 5348 / JCM 9185 / NBRC 15509 / TH2).